The following is a 153-amino-acid chain: SsrA-binding protein (153 aa).

This sequence belongs to the SmpB family.

The protein localises to the cytoplasm. Its function is as follows. Required for rescue of stalled ribosomes mediated by trans-translation. Binds to transfer-messenger RNA (tmRNA), required for stable association of tmRNA with ribosomes. tmRNA and SmpB together mimic tRNA shape, replacing the anticodon stem-loop with SmpB. tmRNA is encoded by the ssrA gene; the 2 termini fold to resemble tRNA(Ala) and it encodes a 'tag peptide', a short internal open reading frame. During trans-translation Ala-aminoacylated tmRNA acts like a tRNA, entering the A-site of stalled ribosomes, displacing the stalled mRNA. The ribosome then switches to translate the ORF on the tmRNA; the nascent peptide is terminated with the 'tag peptide' encoded by the tmRNA and targeted for degradation. The ribosome is freed to recommence translation, which seems to be the essential function of trans-translation. The polypeptide is SsrA-binding protein (Macrococcus caseolyticus (strain JCSC5402) (Macrococcoides caseolyticum)).